Reading from the N-terminus, the 275-residue chain is MAIGLSTYAFFWRASSRVPNPLGLAAMLEQTAESGAGVFQICDYAAVEALSPAELEKLRQRAVDLGIQLELGTRGLATDHLTRYLTMARALDVRFIRTMFNSATHKPTQDEALALLRCVLPEFEQYNIQLGLETYEQVKTRDVLAVVDAIDSPALGICLDPGNCVAALEYPHEVIELTASRVVNLHIKDFAFARQEGWVGFTYSGCLLGTGLLDYDALHQTIRPNERNINQIVEHWLPWQASAEETCRLEDAWTRHSLNYLYTRNPYANRSSHIL.

It catalyses the reaction 3-oxoisoapionate + H(+) = L-erythrulose + CO2. It functions in the pathway carbohydrate metabolism. Involved in catabolism of D-apiose. Catalyzes decarboxylation of 3-oxo-isoapionate to L-erythrulose. The protein is 3-oxo-isoapionate decarboxylase of Pectobacterium atrosepticum (strain SCRI 1043 / ATCC BAA-672) (Erwinia carotovora subsp. atroseptica).